The chain runs to 72 residues: Conotoxin VnMKLT2-021 (72 aa).

An N-terminal signal peptide occupies residues 1–22 (MKLTCVLIVAVLFLTACQLTTA). A propeptide spanning residues 23–45 (ASYARSERQHPDLGSSDQNSKLT) is cleaved from the precursor. Disulfide bonds link Cys-48–Cys-62, Cys-55–Cys-66, and Cys-61–Cys-71.

It belongs to the conotoxin O1 superfamily. Expressed by the venom duct.

It localises to the secreted. In Conus ventricosus (Mediterranean cone), this protein is Conotoxin VnMKLT2-021.